The chain runs to 641 residues: Chaperone protein DnaK (641 aa).

Thr-200 is subject to Phosphothreonine; by autocatalysis. Residues 602–611 (AASSKASAAS) are compositionally biased toward low complexity. Positions 602–641 (AASSKASAASSPPPPPGAGGQKSDVIDAEFEKVDKDKPQA) are disordered. Residues 630–641 (EFEKVDKDKPQA) show a composition bias toward basic and acidic residues.

The protein belongs to the heat shock protein 70 family.

Its function is as follows. Acts as a chaperone. In Methylacidiphilum infernorum (isolate V4) (Methylokorus infernorum (strain V4)), this protein is Chaperone protein DnaK.